We begin with the raw amino-acid sequence, 440 residues long: Putative postmeiotic segregation increased 2-like protein 1 (440 aa).

Over residues 164 to 178 (RVEHNVESSRWEPRR) the composition is skewed to basic and acidic residues. The tract at residues 164–215 (RVEHNVESSRWEPRRRGACGSRGGNFPSPRGGSGVASLERAESSSTEPAKAI) is disordered. In terms of domain architecture, Histidine kinase spans 230–364 (PVVPSLSTAV…MTVSVKQLFS (135 aa)).

It belongs to the DNA mismatch repair MutL/HexB family. Highly expressed in kidney, spleen, adrenal gland, ovary and cerebellum and to a lower extent in liver, esophagus, stomach, duodenum, colon, bladder, uterus, lung, pancreas and cerebrum. Not expressed in heart.

The polypeptide is Putative postmeiotic segregation increased 2-like protein 1 (PMS2P1) (Homo sapiens (Human)).